Consider the following 220-residue polypeptide: Acetate CoA-transferase subunit alpha (220 aa).

CoA is bound at residue 24–30 (GGFMGIG).

It belongs to the 3-oxoacid CoA-transferase subunit A family. As to quaternary structure, heterotetramer composed of two alpha subunits (AtoD) and two beta subunits (AtoA).

The protein resides in the cytoplasm. The enzyme catalyses an acyl-CoA + acetate = a carboxylate + acetyl-CoA. The catalysed reaction is acetoacetate + acetyl-CoA = acetoacetyl-CoA + acetate. It carries out the reaction butanoate + acetyl-CoA = butanoyl-CoA + acetate. It catalyses the reaction acetoacetate + butanoyl-CoA = acetoacetyl-CoA + butanoate. It functions in the pathway lipid metabolism; short-chain fatty acid metabolism. With respect to regulation, inhibited by p-chloromercuribenzoate. Its function is as follows. Coenzyme A transferase which is involved in short-chain fatty acid degradation and catalyzes the activation of short-chain fatty acids to their respective CoA thiolesters. During acetoacetate degradation, catalyzes the transfer of CoA from acetyl-CoA to acetoacetate by a mechanism involving a covalent enzyme-CoA compound as a reaction intermediate. Utilizes a variety of short chain acyl-CoA and carboxylic acid substrates but exhibits maximal activity with normal and 3-keto substrates. The chain is Acetate CoA-transferase subunit alpha from Escherichia coli (strain K12).